A 167-amino-acid chain; its full sequence is Myelin basic protein (167 aa).

Ala-1 is modified (N-acetylalanine). A phosphoserine mark is found at Ser-7 and Ser-12. At Tyr-14 the chain carries Phosphotyrosine. Residue Thr-17 is modified to Phosphothreonine. A Phosphoserine modification is found at Ser-19. Thr-20 is modified (phosphothreonine). 2 positions are modified to citrulline: Arg-25 and Arg-31. At Thr-35 the chain carries Phosphothreonine. Ser-40 carries the phosphoserine modification. Arg-43 and Arg-49 each carry omega-N-methylarginine. The tract at residues 45 to 87 (FGSDRAAPKRGSGKDSHHAARTTHYGSLPQKSQRSQDENPVVH) is induces experimental autoimmune encephalomyelitis (EAE) 1. Residues 46-114 (GSDRAAPKRG…GRGLSLSRFS (69 aa)) form a disordered region. The residue at position 56 (Ser-56) is a Phosphoserine. At Thr-67 the chain carries Phosphothreonine. Tyr-69 carries the post-translational modification Phosphotyrosine. Ser-76 bears the Phosphoserine mark. Residues Thr-94 and Thr-97 each carry the phosphothreonine modification. The residue at position 102 (Gln-102) is a Deamidated glutamine. Arg-106 carries the post-translational modification Omega-N-methylarginine; alternate. Arg-106 bears the Symmetric dimethylarginine; alternate mark. Ser-114 carries the post-translational modification Phosphoserine. Residues 114-122 (SWGAEGQKP) form an induces experimental autoimmune encephalomyelitis (EAE) 2 region. The residue at position 121 (Lys-121) is an N6-acetyllysine. Arg-129 carries the citrulline modification. The disordered stretch occupies residues 136 to 167 (GFKGAHDAQGTLSKIFKLGGRDSRSGSPMARR). Gln-144 is subject to Deamidated glutamine. Citrulline is present on Arg-156. Ser-158 carries the post-translational modification Phosphoserine. Ser-162 bears the Phosphoserine; by UHMK1 mark. Arg-167 bears the Citrulline mark.

This sequence belongs to the myelin basic protein family. As to quaternary structure, homodimer. In terms of processing, at least 5 charge isomers; C1 (the most cationic, least modified, and most abundant form), C2, C3, C4 and C5 (the least cationic form); are produced as a result of optional post-translational modifications such as phosphorylation of serine or threonine residues, deamidation of glutamine or asparagine residues, citrullination and methylation of arginine residues. C1 and C2 are unphosphorylated, C3 and C4 are monophosphorylated and C5 is phosphorylated at two positions. Phosphorylated by TAOK2, VRK2, MAPK11, MAPK12, MAPK14 and MINK1. Post-translationally, proteolytically cleaved in B cell lysosomes by cathepsin CTSG which degrades the major immunogenic MBP epitope and prevents the activation of MBP-specific autoreactive T cells. Found in both the central and the peripheral nervous system.

The protein resides in the myelin membrane. In terms of biological role, is, with PLP, the most abundant protein component of the myelin membrane in the CNS. Has a role in both the formation and stabilization of this compact multilayer arrangement of bilayers. Each splice variant and charge isomer may have a specialized function in the assembly of an optimized, biochemically functional myelin membrane. In Cavia porcellus (Guinea pig), this protein is Myelin basic protein (MBP).